A 99-amino-acid chain; its full sequence is MPKFALKALWLENDLAIAVDQVVAKNRSPLTRYFFWPRDDAWEQLKAELESKTWISEEDRITLLNQATELINYWQNGGRERPISEAQAQFPDILIGGNA.

This sequence belongs to the chloroplast-specific ribosomal protein cS23 family. In terms of assembly, part of the 30S ribosomal subunit.

Its function is as follows. Probably a ribosomal protein or a ribosome-associated protein. This is Probable small ribosomal subunit protein cS23 from Synechococcus sp. (strain JA-3-3Ab) (Cyanobacteria bacterium Yellowstone A-Prime).